The chain runs to 466 residues: Histone acetyltransferase type B catalytic subunit DDB_G0275159 (466 aa).

The 198-residue stretch at 169–366 (AVFRYHEKLQ…FRIAIKKRLY (198 aa)) folds into the N-acetyltransferase domain. Residues 240–242 (YLI) and 247–253 (QRMGHGK) contribute to the acetyl-CoA site. Glutamate 279 functions as the Proton donor/acceptor in the catalytic mechanism. Residues 372-459 (DSEQIEKMKQ…LEENYHKTLS (88 aa)) are a coiled coil.

This sequence belongs to the HAT1 family.

The enzyme catalyses L-lysyl-[protein] + acetyl-CoA = N(6)-acetyl-L-lysyl-[protein] + CoA + H(+). This chain is Histone acetyltransferase type B catalytic subunit DDB_G0275159, found in Dictyostelium discoideum (Social amoeba).